A 248-amino-acid polypeptide reads, in one-letter code: 2,3-bisphosphoglycerate-dependent phosphoglycerate mutase (248 aa).

Substrate contacts are provided by residues 8 to 15 (RHGESLWN), 21 to 22 (TG), arginine 60, 87 to 90 (ERHY), lysine 98, 114 to 115 (RR), and 183 to 184 (GN). Histidine 9 functions as the Tele-phosphohistidine intermediate in the catalytic mechanism. The Proton donor/acceptor role is filled by glutamate 87.

The protein belongs to the phosphoglycerate mutase family. BPG-dependent PGAM subfamily.

The enzyme catalyses (2R)-2-phosphoglycerate = (2R)-3-phosphoglycerate. It participates in carbohydrate degradation; glycolysis; pyruvate from D-glyceraldehyde 3-phosphate: step 3/5. Functionally, catalyzes the interconversion of 2-phosphoglycerate and 3-phosphoglycerate. The chain is 2,3-bisphosphoglycerate-dependent phosphoglycerate mutase from Methanospirillum hungatei JF-1 (strain ATCC 27890 / DSM 864 / NBRC 100397 / JF-1).